The chain runs to 596 residues: Clathrin heavy chain linker domain-containing protein 1 (596 aa).

The stretch at 129–241 forms a coiled coil; the sequence is QLEAKMRIIE…RDIAENLKKD (113 aa).

This chain is Clathrin heavy chain linker domain-containing protein 1 (Clhc1), found in Mus musculus (Mouse).